The sequence spans 525 residues: GMP synthase [glutamine-hydrolyzing] (525 aa).

The Glutamine amidotransferase type-1 domain occupies 9-207 (RILILDFGSQ…VRDICQCEAL (199 aa)). Cys86 serves as the catalytic Nucleophile. Active-site residues include His181 and Glu183. Residues 208 to 400 (WTPAKIIDDA…LGLPYDMLYR (193 aa)) form the GMPS ATP-PPase domain. Residue 235-241 (SGGVDSS) participates in ATP binding.

Homodimer.

The enzyme catalyses XMP + L-glutamine + ATP + H2O = GMP + L-glutamate + AMP + diphosphate + 2 H(+). The protein operates within purine metabolism; GMP biosynthesis; GMP from XMP (L-Gln route): step 1/1. Catalyzes the synthesis of GMP from XMP. The chain is GMP synthase [glutamine-hydrolyzing] from Escherichia coli O127:H6 (strain E2348/69 / EPEC).